A 126-amino-acid chain; its full sequence is Phosphoribosyl-AMP cyclohydrolase (126 aa).

Asp76 contributes to the Mg(2+) binding site. Position 77 (Cys77) interacts with Zn(2+). Mg(2+) is bound by residues Asp78 and Asp80. 2 residues coordinate Zn(2+): Cys94 and Cys101.

This sequence belongs to the PRA-CH family. Homodimer. It depends on Mg(2+) as a cofactor. Requires Zn(2+) as cofactor.

The protein resides in the cytoplasm. The enzyme catalyses 1-(5-phospho-beta-D-ribosyl)-5'-AMP + H2O = 1-(5-phospho-beta-D-ribosyl)-5-[(5-phospho-beta-D-ribosylamino)methylideneamino]imidazole-4-carboxamide. The protein operates within amino-acid biosynthesis; L-histidine biosynthesis; L-histidine from 5-phospho-alpha-D-ribose 1-diphosphate: step 3/9. Catalyzes the hydrolysis of the adenine ring of phosphoribosyl-AMP. The chain is Phosphoribosyl-AMP cyclohydrolase from Nitratidesulfovibrio vulgaris (strain ATCC 29579 / DSM 644 / CCUG 34227 / NCIMB 8303 / VKM B-1760 / Hildenborough) (Desulfovibrio vulgaris).